The chain runs to 244 residues: MSGYNEQFLKKNPLAILGVLRDLNKNQVPLRISWAHGQFISKILAVDPEKLIVDYGSQEYENSAVLRAGQVAIIAETQGAKVEFTLPQLVTGEYQRLPAFITPLPSSLWFVQRREYFRIGAPLYPPYYGVTTLPDTRTLRFRLFDLSLGGMGALLESAIPDGLIEGARFSQVELNMGQWGIFHVDAQLISISERKVIDGKNETITTPRLSFRFLNVSPAVERELQRIIFSLEREARERANKVRE.

The 119-residue stretch at 112 to 230 folds into the PilZ domain; it reads QRREYFRIGA…ERELQRIIFS (119 aa).

The protein belongs to the YcgR family. In terms of assembly, monomer. Interacts with the flagellar basal bodies.

Its subcellular location is the bacterial flagellum basal body. Acts as a flagellar brake, regulating swimming and swarming in a bis-(3'-5') cyclic diguanylic acid (c-di-GMP)-dependent manner. Overexpression of this gene decreases swimming and swarming motility; those cells that are motile turn predominantly counterclockwise. The D-118 mutant is still able to bind FliM but no longer affects motility upon overexpression. Binds 1 c-di-GMP dimer per subunit. The protein is Flagellar brake protein YcgR (ycgR) of Salmonella typhimurium (strain LT2 / SGSC1412 / ATCC 700720).